Consider the following 405-residue polypeptide: Cytoplasmic tRNA 2-thiolation protein 2 (405 aa).

It belongs to the CTU2/NCS2 family.

Its subcellular location is the cytoplasm. The protein operates within tRNA modification; 5-methoxycarbonylmethyl-2-thiouridine-tRNA biosynthesis. Plays a central role in 2-thiolation of mcm(5)S(2)U at tRNA wobble positions of tRNA(Lys), tRNA(Glu) and tRNA(Gln). May act by forming a heterodimer with NCS6/CTU1 that ligates sulfur from thiocarboxylated URM1 onto the uridine of tRNAs at wobble position. The polypeptide is Cytoplasmic tRNA 2-thiolation protein 2 (Drosophila simulans (Fruit fly)).